The following is a 312-amino-acid chain: DNA-directed RNA polymerase subunit alpha (312 aa).

Residues Met1–Thr226 form an alpha N-terminal domain (alpha-NTD) region. The tract at residues Asp243–Lys312 is alpha C-terminal domain (alpha-CTD).

This sequence belongs to the RNA polymerase alpha chain family. As to quaternary structure, homodimer. The RNAP catalytic core consists of 2 alpha, 1 beta, 1 beta' and 1 omega subunit. When a sigma factor is associated with the core the holoenzyme is formed, which can initiate transcription.

The enzyme catalyses RNA(n) + a ribonucleoside 5'-triphosphate = RNA(n+1) + diphosphate. In terms of biological role, DNA-dependent RNA polymerase catalyzes the transcription of DNA into RNA using the four ribonucleoside triphosphates as substrates. This is DNA-directed RNA polymerase subunit alpha from Streptococcus agalactiae serotype III (strain NEM316).